A 325-amino-acid chain; its full sequence is Clavaminate synthase 2 (325 aa).

The Fe cation site is built by histidine 145, glutamate 147, and histidine 280. 2-oxoglutarate is bound at residue arginine 294.

This sequence belongs to the clavaminate synthase family. Fe(2+) is required as a cofactor.

The catalysed reaction is deoxyamidinoproclavaminate + 2-oxoglutarate + O2 = amidinoproclavaminate + succinate + CO2. It carries out the reaction proclavaminate + 2-oxoglutarate + O2 = dihydroclavaminate + succinate + CO2 + H2O. The enzyme catalyses dihydroclavaminate + 2-oxoglutarate + O2 = clavaminate + succinate + CO2 + H2O. The protein operates within antibiotic biosynthesis; clavulanate biosynthesis; clavulanate from D-glyceraldehyde 3-phosphate and L-arginine: step 3/8. Its pathway is antibiotic biosynthesis; clavulanate biosynthesis; clavulanate from D-glyceraldehyde 3-phosphate and L-arginine: step 5/8. It participates in antibiotic biosynthesis; clavulanate biosynthesis; clavulanate from D-glyceraldehyde 3-phosphate and L-arginine: step 6/8. The chain is Clavaminate synthase 2 (cs2) from Streptomyces clavuligerus.